A 194-amino-acid chain; its full sequence is Probable nicotinate-nucleotide adenylyltransferase (194 aa).

This sequence belongs to the NadD family.

The enzyme catalyses nicotinate beta-D-ribonucleotide + ATP + H(+) = deamido-NAD(+) + diphosphate. The protein operates within cofactor biosynthesis; NAD(+) biosynthesis; deamido-NAD(+) from nicotinate D-ribonucleotide: step 1/1. Its function is as follows. Catalyzes the reversible adenylation of nicotinate mononucleotide (NaMN) to nicotinic acid adenine dinucleotide (NaAD). This Brucella suis biovar 1 (strain 1330) protein is Probable nicotinate-nucleotide adenylyltransferase.